Consider the following 833-residue polypeptide: Leucine--tRNA ligase (833 aa).

Residues 41–52 (PYPSGAGLHVGH) carry the 'HIGH' region motif. The short motif at 610-614 (KMSKS) is the 'KMSKS' region element. Lys-613 is a binding site for ATP.

Belongs to the class-I aminoacyl-tRNA synthetase family.

The protein localises to the cytoplasm. It catalyses the reaction tRNA(Leu) + L-leucine + ATP = L-leucyl-tRNA(Leu) + AMP + diphosphate. In Streptococcus pyogenes serotype M3 (strain ATCC BAA-595 / MGAS315), this protein is Leucine--tRNA ligase.